Consider the following 453-residue polypeptide: UPF0210 protein Mbur_0828 (453 aa).

It belongs to the UPF0210 family.

This is UPF0210 protein Mbur_0828 from Methanococcoides burtonii (strain DSM 6242 / NBRC 107633 / OCM 468 / ACE-M).